The primary structure comprises 632 residues: uncharacterized protein (632 aa).

The next 4 membrane-spanning stretches (helical) occupy residues 255–275 (LFYA…ELRV), 506–526 (IALL…LTSI), 566–586 (MIFA…SMVF), and 603–623 (IVVI…AVLF).

The protein resides in the cell membrane. This is an uncharacterized protein from Mycoplasma pneumoniae (strain ATCC 29342 / M129 / Subtype 1) (Mycoplasmoides pneumoniae).